Reading from the N-terminus, the 197-residue chain is Transcription factor FapR (197 aa).

This sequence belongs to the FapR family.

Its function is as follows. Transcriptional factor involved in regulation of membrane lipid biosynthesis by repressing genes involved in fatty acid and phospholipid metabolism. The protein is Transcription factor FapR of Bacillus cereus (strain 03BB102).